We begin with the raw amino-acid sequence, 200 residues long: Holliday junction branch migration complex subunit RuvA (200 aa).

Residues 1-64 form a domain I region; that stretch reads MIGHLRGIIV…EDAHTLYGFH (64 aa). Residues 65 to 143 form a domain II region; that stretch reads NDHERRLFRA…RWHTNDTPSP (79 aa). The interval 144 to 148 is flexible linker; that stretch reads EGLRS. Positions 149 to 200 are domain III; the sequence is SNTQPTQDAISALMALGYKPQEAKRAIDAIQKPDLSAETLIRLALKQMVLGT.

Belongs to the RuvA family. As to quaternary structure, homotetramer. Forms an RuvA(8)-RuvB(12)-Holliday junction (HJ) complex. HJ DNA is sandwiched between 2 RuvA tetramers; dsDNA enters through RuvA and exits via RuvB. An RuvB hexamer assembles on each DNA strand where it exits the tetramer. Each RuvB hexamer is contacted by two RuvA subunits (via domain III) on 2 adjacent RuvB subunits; this complex drives branch migration. In the full resolvosome a probable DNA-RuvA(4)-RuvB(12)-RuvC(2) complex forms which resolves the HJ.

It is found in the cytoplasm. In terms of biological role, the RuvA-RuvB-RuvC complex processes Holliday junction (HJ) DNA during genetic recombination and DNA repair, while the RuvA-RuvB complex plays an important role in the rescue of blocked DNA replication forks via replication fork reversal (RFR). RuvA specifically binds to HJ cruciform DNA, conferring on it an open structure. The RuvB hexamer acts as an ATP-dependent pump, pulling dsDNA into and through the RuvAB complex. HJ branch migration allows RuvC to scan DNA until it finds its consensus sequence, where it cleaves and resolves the cruciform DNA. This is Holliday junction branch migration complex subunit RuvA from Coxiella burnetii (strain CbuG_Q212) (Coxiella burnetii (strain Q212)).